Reading from the N-terminus, the 533-residue chain is ATP synthase F(1) complex catalytic subunit beta, mitochondrial (533 aa).

The transit peptide at 1-53 directs the protein to the mitochondrion; sequence MLGLAGRCSAAAASAARPALRRAAGPSHGFLPLLLSRGAGPAAAVGARRDHAA. The ADP site is built by glycine 214, valine 215, glycine 216, lysine 217, threonine 218, and valine 219. Glycine 214 is a binding site for ATP. Positions 214, 215, 216, 217, and 218 each coordinate phosphate. ATP is bound by residues glycine 216, lysine 217, threonine 218, and valine 219. Position 218 (threonine 218) interacts with Mg(2+). Position 243 (glutamate 243) interacts with Mg(2+). Arginine 244 provides a ligand contact to ATP.

In terms of assembly, homotrimer. Component of the ATP synthase complex composed at least of ATP5F1A/subunit alpha, ATP5F1B/subunit beta, ATP5MC1/subunit c (homooctomer), MT-ATP6/subunit a, MT-ATP8/subunit 8, ATP5ME/subunit e, ATP5MF/subunit f, ATP5MG/subunit g, ATP5MK/subunit k, ATP5MJ/subunit j, ATP5F1C/subunit gamma, ATP5F1D/subunit delta, ATP5F1E/subunit epsilon, ATP5PF/subunit F6, ATP5PB/subunit b, ATP5PD/subunit d, ATP5PO/subunit OSCP. ATP synthase complex consists of a soluble F(1) head domain (subunits alpha(3) and beta(3)) - the catalytic core - and a membrane F(0) domain - the membrane proton channel (subunits c, a, 8, e, f, g, k and j). These two domains are linked by a central stalk (subunits gamma, delta, and epsilon) rotating inside the F1 region and a stationary peripheral stalk (subunits F6, b, d, and OSCP).

It localises to the mitochondrion inner membrane. The enzyme catalyses ATP + H2O + 4 H(+)(in) = ADP + phosphate + 5 H(+)(out). Its function is as follows. Catalytic subunit beta, of the mitochondrial membrane ATP synthase complex (F(1)F(0) ATP synthase or Complex V) that produces ATP from ADP in the presence of a proton gradient across the membrane which is generated by electron transport complexes of the respiratory chain. ATP synthase complex consist of a soluble F(1) head domain - the catalytic core - and a membrane F(1) domain - the membrane proton channel. These two domains are linked by a central stalk rotating inside the F(1) region and a stationary peripheral stalk. During catalysis, ATP synthesis in the catalytic domain of F(1) is coupled via a rotary mechanism of the central stalk subunits to proton translocation. In vivo, can only synthesize ATP although its ATP hydrolase activity can be activated artificially in vitro. With the subunit alpha (ATP5F1A), forms the catalytic core in the F(1) domain. This is ATP synthase F(1) complex catalytic subunit beta, mitochondrial from Gallus gallus (Chicken).